Consider the following 400-residue polypeptide: 1-deoxy-D-xylulose 5-phosphate reductoisomerase (400 aa).

The NADPH site is built by Thr10, Gly11, Ser12, Ile13, Gly36, Asn38, and Asn124. Lys125 provides a ligand contact to 1-deoxy-D-xylulose 5-phosphate. Residue Glu126 coordinates NADPH. Position 150 (Asp150) interacts with Mn(2+). 4 residues coordinate 1-deoxy-D-xylulose 5-phosphate: Ser151, Glu152, Ser186, and His209. Position 152 (Glu152) interacts with Mn(2+). Gly215 lines the NADPH pocket. 1-deoxy-D-xylulose 5-phosphate is bound by residues Ser222, Asn227, Lys228, and Glu231. Residue Glu231 coordinates Mn(2+).

This sequence belongs to the DXR family. Mg(2+) is required as a cofactor. The cofactor is Mn(2+).

It catalyses the reaction 2-C-methyl-D-erythritol 4-phosphate + NADP(+) = 1-deoxy-D-xylulose 5-phosphate + NADPH + H(+). It functions in the pathway isoprenoid biosynthesis; isopentenyl diphosphate biosynthesis via DXP pathway; isopentenyl diphosphate from 1-deoxy-D-xylulose 5-phosphate: step 1/6. Its function is as follows. Catalyzes the NADPH-dependent rearrangement and reduction of 1-deoxy-D-xylulose-5-phosphate (DXP) to 2-C-methyl-D-erythritol 4-phosphate (MEP). The chain is 1-deoxy-D-xylulose 5-phosphate reductoisomerase from Aliivibrio fischeri (strain ATCC 700601 / ES114) (Vibrio fischeri).